Consider the following 843-residue polypeptide: Protein P (843 aa).

Positions 1-177 are terminal protein domain (TP); it reads MPLSYPHFRK…FCGSPYSWEQ (177 aa). The interval 178–346 is spacer; that stretch reads ELQHGSTSIN…YCLSHIINLL (169 aa). Disordered regions lie at residues 202–221 and 285–310; these read SGILSRPSAGSSIQGKFQQS and TNPSLSTSKRHSSTGHAVELHSVPPG. The interval 347-690 is polymerase/reverse transcriptase domain (RT); sequence EDWGPCYEHG…YMNLYPVARQ (344 aa). The Reverse transcriptase domain maps to 357–600; that stretch reads QHHIRTPRTP…YTLNFMGYVI (244 aa). The Mg(2+) site is built by Asp429, Asp551, and Asp552.

Belongs to the hepadnaviridae P protein family.

It catalyses the reaction DNA(n) + a 2'-deoxyribonucleoside 5'-triphosphate = DNA(n+1) + diphosphate. The enzyme catalyses Endonucleolytic cleavage to 5'-phosphomonoester.. Activated by host HSP70 and HSP40 in vitro to be able to bind the epsilon loop of the pgRNA. Because deletion of the RNase H region renders the protein partly chaperone-independent, the chaperones may be needed indirectly to relieve occlusion of the RNA-binding site by this domain. Inhibited by several reverse-transcriptase inhibitors: Lamivudine, Adefovir and Entecavir. Multifunctional enzyme that converts the viral RNA genome into dsDNA in viral cytoplasmic capsids. This enzyme displays a DNA polymerase activity that can copy either DNA or RNA templates, and a ribonuclease H (RNase H) activity that cleaves the RNA strand of RNA-DNA heteroduplexes in a partially processive 3'- to 5'-endonucleasic mode. Neo-synthesized pregenomic RNA (pgRNA) are encapsidated together with the P protein, and reverse-transcribed inside the nucleocapsid. Initiation of reverse-transcription occurs first by binding the epsilon loop on the pgRNA genome, and is initiated by protein priming, thereby the 5'-end of (-)DNA is covalently linked to P protein. Partial (+)DNA is synthesized from the (-)DNA template and generates the relaxed circular DNA (RC-DNA) genome. After budding and infection, the RC-DNA migrates in the nucleus, and is converted into a plasmid-like covalently closed circular DNA (cccDNA). The activity of P protein does not seem to be necessary for cccDNA generation, and is presumably released from (+)DNA by host nuclear DNA repair machinery. The protein is Protein P of Hepatitis B virus genotype F1 (isolate Argentina/sa11/2000) (HBV-F).